The primary structure comprises 209 residues: NAD(P)H-quinone oxidoreductase subunit I (209 aa).

2 4Fe-4S ferredoxin-type domains span residues 55-84 and 95-124; these read GRIHFEYDKCIACEVCVRVCPINLPVVDWE and KHYSIDFGVCIFCGNCVEYCPSNCLSMTEE. Residues cysteine 64, cysteine 67, cysteine 70, cysteine 74, cysteine 104, cysteine 107, cysteine 110, and cysteine 114 each coordinate [4Fe-4S] cluster.

It belongs to the complex I 23 kDa subunit family. As to quaternary structure, NDH-1 is composed of at least 11 different subunits. It depends on [4Fe-4S] cluster as a cofactor.

It is found in the cellular thylakoid membrane. The catalysed reaction is a plastoquinone + NADH + (n+1) H(+)(in) = a plastoquinol + NAD(+) + n H(+)(out). It catalyses the reaction a plastoquinone + NADPH + (n+1) H(+)(in) = a plastoquinol + NADP(+) + n H(+)(out). In terms of biological role, NDH-1 shuttles electrons from an unknown electron donor, via FMN and iron-sulfur (Fe-S) centers, to quinones in the respiratory and/or the photosynthetic chain. The immediate electron acceptor for the enzyme in this species is believed to be plastoquinone. Couples the redox reaction to proton translocation, and thus conserves the redox energy in a proton gradient. This chain is NAD(P)H-quinone oxidoreductase subunit I, found in Trichodesmium erythraeum (strain IMS101).